Here is a 579-residue protein sequence, read N- to C-terminus: Extracellular serine/threonine protein kinase FAM20C (579 aa).

Over 1-10 the chain is Cytoplasmic; it reads MKMILVRRFR. Positions 1-87 are excised as a propeptide; sequence MKMILVRRFR…PNKHTLRILQ (87 aa). Residues 11–31 form a helical; Signal-anchor for type II membrane protein membrane-spanning segment; sequence VLILVVFLLACALHIAVDLLP. The Lumenal portion of the chain corresponds to 32–579; the sequence is KLDRRATRSS…ATEHRASTER (548 aa). Positions 38–79 are disordered; it reads TRSSGEPGCSCAQPAAEAAGPGWAQARSRPGESAGGDAGWPN. Low complexity predominate over residues 49-63; sequence AQPAAEAAGPGWAQA. A glycan (N-linked (GlcNAc...) asparagine) is linked at Asn96. A disordered region spans residues 104-155; that stretch reads KLPSAAEPVDHAPRGQEPRSPPPRDPAHRPLLRDPGPRPRVPPPGPSGDGSL. Composition is skewed to basic and acidic residues over residues 111–120 and 128–140; these read PVDHAPRGQE and DPAH…DPGP. ATP-binding residues include Gln264, Lys280, and Glu301. Glu301 lines the Mn(2+) pocket. The interval 349–560 is kinase domain; the sequence is FVSPANNICF…AVRDCVEKDG (212 aa). 2 disulfide bridges follow: Cys357/Cys373 and Cys362/Cys366. Residue 384-387 participates in ATP binding; that stretch reads AAFL. Intrachain disulfides connect Cys421/Cys495 and Cys496/Cys555. Residue Asp453 is part of the active site. ATP-binding residues include Glu458 and Asp473. Residue Asp473 participates in Mn(2+) binding.

The protein belongs to the FAM20 family. In terms of assembly, homodimer; disulfide-linked. Interacts with FAM20A; probably forming a heterotetramer of 2 subunits of FAM20A and 2 subunits of FAM20C. Interacts with COPII components SEC23A and SEC24A; transport of FAM20C from the endoplasmic reticulum to the Golgi is likely to be mediated by COPII vesicles. It depends on Mn(2+) as a cofactor. In terms of processing, N-glycosylation is required for folding. Autophosphorylated. Post-translationally, propeptide cleavage by MBTPS1/S1P promotes FAM20C secretion and maximal kinase activity which is essential for efficient osteoblast differentiation and biomineralization. In terms of tissue distribution, in the mammary gland, expressed at higher levels in lactating mice than in virgin mice (at protein level). Highly expressed in the tooth. No expression in the dental pulp. At the secretory stage of amelogenesis, it is detected in the matrix of the enamel, in the ameloblasts, and within the cells adjoining the stratum intermedium (a tissue layer analogous to the stellate reticulum seen in the developing molar). Strong expression is observed in maturation stage ameloblasts and throughout the non-cornified layers of the gingival epithelium. Expressed at moderate levels in bone and at low levels in kidney, liver, brain and lung. Very low expression, if any, in spleen and skeletal muscle.

Its subcellular location is the golgi apparatus membrane. The protein localises to the secreted. It is found in the endoplasmic reticulum. The catalysed reaction is L-seryl-[protein] + ATP = O-phospho-L-seryl-[protein] + ADP + H(+). The enzyme catalyses L-threonyl-[protein] + ATP = O-phospho-L-threonyl-[protein] + ADP + H(+). Its activity is regulated as follows. Serine/threonine protein kinase activity is increased upon interaction with FAM20A. Its function is as follows. Golgi serine/threonine protein kinase that phosphorylates secretory pathway proteins within Ser-x-Glu/pSer motifs and plays a key role in biomineralization of bones and teeth. Constitutes the main protein kinase for extracellular proteins, generating the majority of the extracellular phosphoproteome. Mainly phosphorylates proteins within the Ser-x-Glu/pSer motif, but also displays a broader substrate specificity. Phosphorylates ERO1A, enhancing its activity which is required to maintain endoplasmic reticulum redox homeostasis and for oxidative protein folding. During endoplasmic reticulum stress, phosphorylates P4HB/PDIA1 which induces a functional switch, causing P4HB to change from an oxidoreductase to a molecular chaperone. This is critical to maintain ER proteostasis and reduce cell death under ER stress. Phosphorylation of P4HB also promotes its interaction with ERN1, leading to reduced activity of ERN1, a key sensor for the endoplasmic reticulum unfolded protein response. Required for osteoblast differentiation and mineralization. Phosphorylates casein as well as a number of proteins involved in biomineralization such as AMELX, AMTN, ENAM and SPP1. In addition to its role in biomineralization, also plays a role in lipid homeostasis, wound healing and cell migration and adhesion. In Mus musculus (Mouse), this protein is Extracellular serine/threonine protein kinase FAM20C.